Reading from the N-terminus, the 1376-residue chain is DNA-directed RNA polymerase subunit beta (1376 aa).

Residues 1357-1368 (NSKTGRQTNPGT) are compositionally biased toward polar residues. A disordered region spans residues 1357–1376 (NSKTGRQTNPGTRENLPAAE).

It belongs to the RNA polymerase beta chain family. As to quaternary structure, the RNAP catalytic core consists of 2 alpha, 1 beta, 1 beta' and 1 omega subunit. When a sigma factor is associated with the core the holoenzyme is formed, which can initiate transcription.

It carries out the reaction RNA(n) + a ribonucleoside 5'-triphosphate = RNA(n+1) + diphosphate. Its function is as follows. DNA-dependent RNA polymerase catalyzes the transcription of DNA into RNA using the four ribonucleoside triphosphates as substrates. In Azorhizobium caulinodans (strain ATCC 43989 / DSM 5975 / JCM 20966 / LMG 6465 / NBRC 14845 / NCIMB 13405 / ORS 571), this protein is DNA-directed RNA polymerase subunit beta.